Here is a 278-residue protein sequence, read N- to C-terminus: Undecaprenyl-diphosphatase (278 aa).

The next 8 membrane-spanning stretches (helical) occupy residues tyrosine 3 to serine 23, valine 42 to phenylalanine 62, phenylalanine 88 to isoleucine 108, isoleucine 112 to tyrosine 132, isoleucine 152 to isoleucine 172, leucine 190 to serine 210, glycine 225 to leucine 245, and valine 253 to isoleucine 273.

Belongs to the UppP family.

It localises to the cell membrane. The enzyme catalyses di-trans,octa-cis-undecaprenyl diphosphate + H2O = di-trans,octa-cis-undecaprenyl phosphate + phosphate + H(+). Its function is as follows. Catalyzes the dephosphorylation of undecaprenyl diphosphate (UPP). This Saccharolobus islandicus (strain M.16.4 / Kamchatka #3) (Sulfolobus islandicus) protein is Undecaprenyl-diphosphatase.